A 129-amino-acid chain; its full sequence is Small ribosomal subunit protein uS11 (129 aa).

The protein belongs to the universal ribosomal protein uS11 family. In terms of assembly, part of the 30S ribosomal subunit. Interacts with proteins S7 and S18. Binds to IF-3.

Located on the platform of the 30S subunit, it bridges several disparate RNA helices of the 16S rRNA. Forms part of the Shine-Dalgarno cleft in the 70S ribosome. This is Small ribosomal subunit protein uS11 from Serratia proteamaculans (strain 568).